Reading from the N-terminus, the 560-residue chain is Leucine-rich repeat and IQ domain-containing protein 4 (560 aa).

Residues 1–20 form a disordered region; it reads MSKDIKSVEHSPKIHQRNDP. LRR repeat units follow at residues 23–47, 48–70, 72–95, 97–116, 117–140, 141–164, 166–187, 188–210, 212–233, 234–256, 258–281, 283–301, 302–325, 326–348, 350–371, 374–397, 398–422, 424–443, 444–466, and 468–489; these read VNDRTFFIDASNQSLTAIPLEIFTF, TELEEVHLENNQIEEIPQEIQRL, NIRVLYLDKNNLRSLCPALGLLSS, ESLDLSYNPIFSSSLVVVSF, LHALRELRLYQTDLKEIPVVIFKN, LHHLELLGLTGNHLKCLPKEIVNQ, KLREIYLKRNQFEVFPQELCVL, YTLEIIDLDENKIGAIPEEIGHL, GLQKFYMASNNLPVLPASLCQC, SQLSVLDLSHNLLHSIPKSFAEL, KMTEIGLSGNRLEKVPRLICRWTS, HLLYLGNTGLHRLRGSFRC, LVNLRFLDLSQNHLHHCPLQICAL, KNLEVLGLDDNKIGQLPSELGSL, KLKILGLTGNEFLSFPEEVLSL, LEKLYIGQDQGFKLTYVPEHIRKL, QSLKELYIENNHLEYLPVSLGSMPN, EVLDCRHNLLKQLPDAICQA, QALKELRLEDNLLTHLPENLDSL, and NLKVLTLMDNPMEEPPKEVCAE. In terms of domain architecture, IQ spans 504–533; sequence RNIMATKIQAWWRGTMVQRGFGKFGELLKP. Residues 529–560 are disordered; the sequence is ELLKPQKKGKTSPKDKKGKKDVKGKPGKGKKK. Residues 533-560 are compositionally biased toward basic residues; it reads PQKKGKTSPKDKKGKKDVKGKPGKGKKK.

The polypeptide is Leucine-rich repeat and IQ domain-containing protein 4 (LRRIQ4) (Homo sapiens (Human)).